A 279-amino-acid chain; its full sequence is Phosphatidylglycerol--prolipoprotein diacylglyceryl transferase (279 aa).

Helical transmembrane passes span 22–42 (WYGIIIACGILLGYFIAQAAL), 52–72 (LIDIIFYSAIVGFIVARIYFV), and 89–109 (IWHGGIAIHGGLIGGLISGII). Arg137 contacts a 1,2-diacyl-sn-glycero-3-phospho-(1'-sn-glycerol). 2 consecutive transmembrane segments (helical) span residues 203–223 (LGETFFGYLIWYSVGRFFVEA) and 235–255 (IRVAQLVSVVLILISVIFVIY).

The protein belongs to the Lgt family.

The protein localises to the cell membrane. The catalysed reaction is L-cysteinyl-[prolipoprotein] + a 1,2-diacyl-sn-glycero-3-phospho-(1'-sn-glycerol) = an S-1,2-diacyl-sn-glyceryl-L-cysteinyl-[prolipoprotein] + sn-glycerol 1-phosphate + H(+). Its pathway is protein modification; lipoprotein biosynthesis (diacylglyceryl transfer). Catalyzes the transfer of the diacylglyceryl group from phosphatidylglycerol to the sulfhydryl group of the N-terminal cysteine of a prolipoprotein, the first step in the formation of mature lipoproteins. The polypeptide is Phosphatidylglycerol--prolipoprotein diacylglyceryl transferase (Staphylococcus epidermidis (strain ATCC 12228 / FDA PCI 1200)).